The sequence spans 214 residues: Adenylate kinase (214 aa).

Residue 10-15 (GAGKGT) participates in ATP binding. Residues 30–59 (STGDMLRAAIKAGTELGNAAKRVMDEGKLV) are NMP. AMP-binding positions include threonine 31, arginine 36, 57–59 (KLV), 85–88 (GFPR), and glutamine 92. The interval 122-159 (GRRVHPASGRVYHLQYNPPQNDGKDDETGEDLVIRADD) is LID. ATP contacts are provided by residues arginine 123 and 132 to 133 (VY). 2 residues coordinate AMP: arginine 156 and arginine 167. Lysine 200 contributes to the ATP binding site.

The protein belongs to the adenylate kinase family. Monomer.

The protein localises to the cytoplasm. The enzyme catalyses AMP + ATP = 2 ADP. Its pathway is purine metabolism; AMP biosynthesis via salvage pathway; AMP from ADP: step 1/1. Its function is as follows. Catalyzes the reversible transfer of the terminal phosphate group between ATP and AMP. Plays an important role in cellular energy homeostasis and in adenine nucleotide metabolism. The polypeptide is Adenylate kinase (Pseudoalteromonas atlantica (strain T6c / ATCC BAA-1087)).